The following is a 572-amino-acid chain: MNIKKLSLCIFFATTQVHAFTQWGAGGITPMGHEWLTRTSALEVLNAEHKTSVDPNDPRNTWTSGLAKNIDISTADDEVAKIKSHTNDNSLYAPRSDAVYSAIVGQRWVDLGGMNVANNLISQTGPDCFDAVSQEPADIQQDHFMRRYDDNGQQGGVKSAQRGQERFITHFINAAMATNKRIVVWDGGGSSAKTDVDYNYFLFGRAVHLFQDSFSPEHVVRSPSDNYEKVRQVKAYICTEGAEQHAHSTGAVLDYTSGDVIWKVGTKTDTGWGGYKASNMKPVALVAMEASKDLWAAFMRTMSVDINEREKYARNEAQVLIDKWMSFDKDEMEHWYDNENNRDNTYVKVDGDTGKGKLQKECMSGLSAKNRYGATIKPKTQKELVDVLDDSRRYCLFNIEAEPGYADANDPYLNIPFNWRWKSNSWLVPNASWQQKQLDRDTGKIIKIKEFTNNQELTVDSIENNYSIVTGAKKPLSLVRVPGDGGKSFYLRSKDNPYLFFSYSDKKNGRIKLWHSPNQAEFEILPGNNIFNLKNTYWNQYVWYDKNSKGAYLTEKGSPDNASSKWIISEEN.

In terms of biological role, bacterial hemolysins are exotoxins that attack blood cell membranes and cause cell rupture by mechanisms not clearly defined. In Aeromonas salmonicida, this protein is Hemolysin-1 (ash1).